Here is a 197-residue protein sequence, read N- to C-terminus: Glycerol-3-phosphate acyltransferase (197 aa).

A run of 5 helical transmembrane segments spans residues 1-21, 50-70, 82-102, 112-132, and 159-179; these read MDFIFPLISYLLGAIPFGLLI, LGFATLLCDSLKGFLPMVLAA, IVCLSGVMGVLGHMFPVYLGF, LGVFLFLSPAAIAISLGVFAA, and GASQLKIITAGFVALLIWIKH.

The protein belongs to the PlsY family. In terms of assembly, probably interacts with PlsX.

Its subcellular location is the cell inner membrane. The enzyme catalyses an acyl phosphate + sn-glycerol 3-phosphate = a 1-acyl-sn-glycero-3-phosphate + phosphate. It participates in lipid metabolism; phospholipid metabolism. Functionally, catalyzes the transfer of an acyl group from acyl-phosphate (acyl-PO(4)) to glycerol-3-phosphate (G3P) to form lysophosphatidic acid (LPA). This enzyme utilizes acyl-phosphate as fatty acyl donor, but not acyl-CoA or acyl-ACP. The sequence is that of Glycerol-3-phosphate acyltransferase from Desulfotalea psychrophila (strain LSv54 / DSM 12343).